The sequence spans 316 residues: Olfactory receptor 1165 (316 aa).

The Extracellular portion of the chain corresponds to 1–28 (MMLDLGNESSVTMFILSGFSEYPHLHAP). Asparagine 7 is a glycosylation site (N-linked (GlcNAc...) asparagine). Residues 29-50 (LFLLFFMIYTVTLIGNLGIIVV) traverse the membrane as a helical segment. At 51–61 (RKVNPKLHTPM) the chain is on the cytoplasmic side. A helical transmembrane segment spans residues 62 to 80 (YFFLSHLSFLDICYSSVFT). Topologically, residues 81-99 (PKLLEILIVEDRTISFKGC) are extracellular. Cysteine 99 and cysteine 181 are joined by a disulfide. The chain crosses the membrane as a helical span at residues 100 to 122 (MTQFFLICAFVITEMFMLAVMAY). The Cytoplasmic portion of the chain corresponds to 123–141 (DRFVAVCNPLLYTVSMSPK). Residues 142-166 (LCAFLVAGTYMWGVLCSLTITYSLL) form a helical membrane-spanning segment. Over 167–205 (QLSYCGPNIINHFGCEYSAILSLSCSDPTFSQVVCLTIS) the chain is Extracellular. A helical membrane pass occupies residues 206–228 (IFNETCSLLIILASYVFIVVTII). The Cytoplasmic segment spans residues 229–239 (KMPSKGGLQKA). Residues 240-263 (FSTCSSHLTAISIFHGIILLLYCV) form a helical membrane-spanning segment. The Extracellular portion of the chain corresponds to 264-268 (PNSKN). The chain crosses the membrane as a helical span at residues 269–291 (SWLVVKVATVLFTVMIPMLNPLI). Over 292–316 (YSLRNKDVKGTVSRLMHLKLQAHST) the chain is Cytoplasmic.

Belongs to the G-protein coupled receptor 1 family.

It localises to the cell membrane. In terms of biological role, olfactory receptor. The polypeptide is Olfactory receptor 1165 (Mus musculus (Mouse)).